The primary structure comprises 297 residues: 33 kDa chaperonin (297 aa).

Cystine bridges form between Cys-232-Cys-234 and Cys-266-Cys-269.

It belongs to the HSP33 family. Under oxidizing conditions two disulfide bonds are formed involving the reactive cysteines. Under reducing conditions zinc is bound to the reactive cysteines and the protein is inactive.

The protein localises to the cytoplasm. Its function is as follows. Redox regulated molecular chaperone. Protects both thermally unfolding and oxidatively damaged proteins from irreversible aggregation. Plays an important role in the bacterial defense system toward oxidative stress. The chain is 33 kDa chaperonin from Azotobacter vinelandii (strain DJ / ATCC BAA-1303).